The following is a 756-amino-acid chain: MDLDYSSDNSRLVADNQNNKTNTKNQSQLSTSSQIPQTSQSYQQQQQHNQQQQQQQQQKQNSRPSSPKTIQAKVNNNNNNNNNNNNNNNNNNNNGATISHPPTSQSNEDLSSSAEIHHDDSAQLNSNIFENLGFVIDITINLKRKMELVKIIKKNGGKSCYSCTKATHLITTKQGYLEKTQKVTQAISLGIPILVKEYVHYCAFKKELLGVENYLVSSLILNPTSTTLNSSQDLIEKPNEEEPQNGTINEQPIAMTIDNTLESNKPIETIQPSSLEKQEPKETELQTQQQPQTELKSELEPQQLQLIQEKDKNINNLSIDSNHMDTSKIEAGNNISNQTQSNIISSVVQTIEPLKECNKIDLDNNNNNNNNNNNNNNNNNNNNNNNNNNNNNNSSSNNKNKNNVDEAQEGLNINSVMDVHLTSSTSSTLSSSDNQDNELLRDEGTTPKSKKKFSQKKNHLLNLKKSYQDPEIIAHSRPRKSSGGVSLVEALSDHANYISNLDGFKYYARANKSSLNSNATTSGGNNRSIKLNEYKYDDEEEDEEDEDEEDEEEDEEEEEEEEEEEEDYDDEDLNDEESDEDDFDSDEDVSRFIKGKLLQKQQKIYKDLERFEHSRQQQHHHHQSSQVNSSKPRSRSHSRDYIESEIAKYLLNNSEKQIPLSPTKKRSLSNQFHQDGGNNTTDGNLFNNFSTNGGGNRTNIDDSIKQSILESPSSSSLKSSKSKKSKKPFLPPLSTLVHILVTFIILSAFFMSLPSN.

The span at 1 to 10 (MDLDYSSDNS) shows a compositional bias: polar residues. A disordered region spans residues 1–113 (MDLDYSSDNS…SQSNEDLSSS (113 aa)). 2 stretches are compositionally biased toward low complexity: residues 16-66 (NQNN…RPSS) and 75-94 (NNNN…NNNN). Over residues 95-113 (GATISHPPTSQSNEDLSSS) the composition is skewed to polar residues. Residues 124–216 (LNSNIFENLG…ELLGVENYLV (93 aa)) enclose the BRCT domain. Disordered stretches follow at residues 229–251 (NSSQ…INEQ), 272–298 (PSSL…LKSE), 359–403 (KIDL…NKNN), and 422–463 (TSST…LLNL). Composition is skewed to low complexity over residues 285 to 298 (LQTQ…LKSE), 364 to 401 (NNNN…NKNK), and 422 to 432 (TSSTSSTLSSS). A compositionally biased stretch (basic residues) spans 448 to 459 (KSKKKFSQKKNH). A Nuclear localization signal motif is present at residues 464–480 (KKSYQDPEIIAHSRPRK). Residues 495-512 (ANYISNLDGFKYYARANK) are calmodulin binding. The segment covering 514–529 (SLNSNATTSGGNNRSI) has biased composition (polar residues). A disordered region spans residues 514–587 (SLNSNATTSG…SDEDDFDSDE (74 aa)). The span at 536–587 (YDDEEEDEEDEDEEDEEEDEEEEEEEEEEEEDYDDEDLNDEESDEDDFDSDE) shows a compositional bias: acidic residues. Positions 537–588 (DDEEEDEEDEDEEDEEEDEEEEEEEEEEEEDYDDEDLNDEESDEDDFDSDED) are DEED region. Calmodulin binding stretches follow at residues 589-606 (VSRF…KIYK) and 596-613 (KLLQ…RFEH). 2 disordered regions span residues 613–639 (HSRQ…SHSR) and 660–700 (LSPT…RTNI). Residues 668–691 (LSNQFHQDGGNNTTDGNLFNNFST) are compositionally biased toward polar residues.

In terms of assembly, interacts with calmodulin and CBPD1 in the presence of Ca(2+).

The protein localises to the nucleus. This is Nucleomorphin (numA) from Dictyostelium discoideum (Social amoeba).